The chain runs to 120 residues: Large ribosomal subunit protein eL34x (120 aa).

The interval 31 to 50 (TYQTTNKRASGPKCPVTGKR) is disordered.

Belongs to the eukaryotic ribosomal protein eL34 family.

This Arabidopsis thaliana (Mouse-ear cress) protein is Large ribosomal subunit protein eL34x (RPL34C).